The following is a 232-amino-acid chain: Ribonuclease 3 (232 aa).

In terms of domain architecture, RNase III spans 5-134; it reads QTVLKNHFAI…FLGALLLDKD (130 aa). Glutamate 47 serves as a coordination point for Mg(2+). Aspartate 51 is an active-site residue. Residues aspartate 120 and glutamate 123 each coordinate Mg(2+). The active site involves glutamate 123. Positions 160–229 constitute a DRBM domain; it reads DYKTHLQELL…AKNAVEKGLD (70 aa).

The protein belongs to the ribonuclease III family. Homodimer. Mg(2+) serves as cofactor.

It is found in the cytoplasm. It catalyses the reaction Endonucleolytic cleavage to 5'-phosphomonoester.. Functionally, digests double-stranded RNA. Involved in the processing of primary rRNA transcript to yield the immediate precursors to the large and small rRNAs (23S and 16S). Processes some mRNAs, and tRNAs when they are encoded in the rRNA operon. Processes pre-crRNA and tracrRNA of type II CRISPR loci if present in the organism. The polypeptide is Ribonuclease 3 (Streptococcus pneumoniae (strain P1031)).